The primary structure comprises 966 residues: Glycine dehydrogenase (decarboxylating) (966 aa).

The residue at position 713 (Lys-713) is an N6-(pyridoxal phosphate)lysine.

The protein belongs to the GcvP family. In terms of assembly, the glycine cleavage system is composed of four proteins: P, T, L and H. It depends on pyridoxal 5'-phosphate as a cofactor.

The enzyme catalyses N(6)-[(R)-lipoyl]-L-lysyl-[glycine-cleavage complex H protein] + glycine + H(+) = N(6)-[(R)-S(8)-aminomethyldihydrolipoyl]-L-lysyl-[glycine-cleavage complex H protein] + CO2. Functionally, the glycine cleavage system catalyzes the degradation of glycine. The P protein binds the alpha-amino group of glycine through its pyridoxal phosphate cofactor; CO(2) is released and the remaining methylamine moiety is then transferred to the lipoamide cofactor of the H protein. This Shewanella halifaxensis (strain HAW-EB4) protein is Glycine dehydrogenase (decarboxylating).